Reading from the N-terminus, the 177-residue chain is MSELTTIARPYAKAAFEFAVEHKAVDQWLGMLGFAAQVAENETIHNLVNGSVAAEELASIFVGICGEQLDEHGQNLIRVMAENGRLGVLPAVVAEFVAFKAELDKEVQADVISAIELTDQQKANIQASLEQRLARKVKLNCSMDASLMAGVLIKAGDLVIDGTVRGKLDRMADALQS.

It belongs to the ATPase delta chain family. As to quaternary structure, F-type ATPases have 2 components, F(1) - the catalytic core - and F(0) - the membrane proton channel. F(1) has five subunits: alpha(3), beta(3), gamma(1), delta(1), epsilon(1). F(0) has three main subunits: a(1), b(2) and c(10-14). The alpha and beta chains form an alternating ring which encloses part of the gamma chain. F(1) is attached to F(0) by a central stalk formed by the gamma and epsilon chains, while a peripheral stalk is formed by the delta and b chains.

It is found in the cell inner membrane. Functionally, f(1)F(0) ATP synthase produces ATP from ADP in the presence of a proton or sodium gradient. F-type ATPases consist of two structural domains, F(1) containing the extramembraneous catalytic core and F(0) containing the membrane proton channel, linked together by a central stalk and a peripheral stalk. During catalysis, ATP synthesis in the catalytic domain of F(1) is coupled via a rotary mechanism of the central stalk subunits to proton translocation. In terms of biological role, this protein is part of the stalk that links CF(0) to CF(1). It either transmits conformational changes from CF(0) to CF(1) or is implicated in proton conduction. The polypeptide is ATP synthase subunit delta (Aeromonas hydrophila subsp. hydrophila (strain ATCC 7966 / DSM 30187 / BCRC 13018 / CCUG 14551 / JCM 1027 / KCTC 2358 / NCIMB 9240 / NCTC 8049)).